We begin with the raw amino-acid sequence, 316 residues long: Ribosomal RNA small subunit methyltransferase H (316 aa).

Residues 35-37 (AGH), aspartate 55, phenylalanine 84, aspartate 105, and glutamine 112 each bind S-adenosyl-L-methionine.

This sequence belongs to the methyltransferase superfamily. RsmH family.

It is found in the cytoplasm. The enzyme catalyses cytidine(1402) in 16S rRNA + S-adenosyl-L-methionine = N(4)-methylcytidine(1402) in 16S rRNA + S-adenosyl-L-homocysteine + H(+). Specifically methylates the N4 position of cytidine in position 1402 (C1402) of 16S rRNA. This is Ribosomal RNA small subunit methyltransferase H from Streptococcus uberis (strain ATCC BAA-854 / 0140J).